We begin with the raw amino-acid sequence, 1049 residues long: Dyslexia-associated protein KIAA0319-like protein (1049 aa).

Residues 1 to 29 (MEKRLGVKPNPASWILSGYYWQTSAKWLR) lie on the Cytoplasmic side of the membrane. A helical transmembrane segment spans residues 30 to 50 (SLYLFYTCFCFSVLWLSTDAS). The MANSC domain occupies 49–127 (ASESRCQQGK…AFRTHSSNSM (79 aa)). The Extracellular portion of the chain corresponds to 51–932 (ESRCQQGKTQ…DSNCEWSVLY (882 aa)). Residues Asn-247, Asn-395, Asn-472, Asn-487, and Asn-525 are each glycosylated (N-linked (GlcNAc...) asparagine). 5 consecutive PKD domains span residues 312–401 (SAGE…VKPE), 409–498 (IAIV…VNKA), 504–594 (VANA…VQPE), 600–688 (QADA…VKEE), and 694–785 (IAKI…VKPD). A helical membrane pass occupies residues 933 to 953 (VIIATFVIVVALGILSWTVIC). At 954–1049 (CCKRQKGKPK…KARSPREEIL (96 aa)) the chain is on the cytoplasmic side. A Phosphothreonine modification is found at Thr-974. Ser-978, Ser-1009, and Ser-1031 each carry phosphoserine. The interval 1022–1049 (GKLLHGQNGSVPNGQTPLKARSPREEIL) is disordered. Polar residues predominate over residues 1028–1037 (QNGSVPNGQT). The residue at position 1037 (Thr-1037) is a Phosphothreonine.

In terms of assembly, interacts with RTN4R. As to quaternary structure, (Microbial infection) Interacts with AAV-2 VP1. In terms of processing, N-glycosylated. As to expression, expressed in cortical neurons in the brain cortex (at protein level).

It is found in the cytoplasmic granule membrane. The protein resides in the golgi apparatus membrane. Its subcellular location is the golgi apparatus. The protein localises to the trans-Golgi network membrane. It localises to the cell membrane. Its function is as follows. Possible role in axon guidance through interaction with RTN4R. (Microbial infection) Acts as a receptor for adeno-associated virus and is involved in adeno-associated virus infection through endocytosis system. The protein is Dyslexia-associated protein KIAA0319-like protein of Homo sapiens (Human).